The chain runs to 319 residues: Multivesicular body subunit 12B (319 aa).

A disordered region spans residues 1-50; it reads MRSCFCVRRSRDPPPPQPPPPPPQRGTDQSTMPEVKDLSEALPETSMDPI. Over residues 13–24 the composition is skewed to pro residues; sequence PPPPQPPPPPPQ. Phosphoserine is present on residues serine 46 and serine 101. Residues 47–193 form the MABP domain; sequence MDPITGVGVV…SMGIWYRMGR (147 aa). 3 positions are modified to phosphothreonine: threonine 122, threonine 204, and threonine 205. Positions 195–222 are disordered; the sequence is PRNHDSSQPTTPSQSSAASTPAPNLPRH. Residues 200–216 are compositionally biased toward low complexity; that stretch reads SSQPTTPSQSSAASTPA. Phosphoserine is present on serine 224. The region spanning 254-303 is the UMA domain; it reads MDGVPFMISEKFSCVPESMQPFDLLGITIKSLAEIEKEYEYSFRTEQSAA. The segment at 299 to 319 is disordered; sequence EQSAAARLPPSPTRCQQIPQS. The residue at position 309 (serine 309) is a Phosphoserine.

This sequence belongs to the MVB12 family. As to quaternary structure, component of the ESCRT-I complex (endosomal sorting complex required for transport I) which consists of TSG101, VPS28, a VPS37 protein (VPS37A to -D) and MVB12A or MVB12B in a 1:1:1:1 stoichiometry. Interacts with TSG101; the association appears to be mediated by the TSG101-VPS37 binary subcomplex. Interacts with VPS28. Interacts with VPS37B; the association appears to be mediated by the TSG101-VPS37 binary subcomplex. Interacts with VPS37C; the association appears to be mediated by the TSG101-VPS37 binary subcomplex.

It is found in the endosome. The protein localises to the late endosome membrane. In terms of biological role, component of the ESCRT-I complex, a regulator of vesicular trafficking process. Required for the sorting of endocytic ubiquitinated cargos into multivesicular bodies. The polypeptide is Multivesicular body subunit 12B (MVB12B) (Homo sapiens (Human)).